The sequence spans 364 residues: UDP-N-acetylglucosamine--N-acetylmuramyl-(pentapeptide) pyrophosphoryl-undecaprenol N-acetylglucosamine transferase (364 aa).

Residues 10–12 (TGG), Asn128, Arg170, Ser199, Ile250, and Gln295 contribute to the UDP-N-acetyl-alpha-D-glucosamine site.

Belongs to the glycosyltransferase 28 family. MurG subfamily.

Its subcellular location is the cell inner membrane. It catalyses the reaction di-trans,octa-cis-undecaprenyl diphospho-N-acetyl-alpha-D-muramoyl-L-alanyl-D-glutamyl-meso-2,6-diaminopimeloyl-D-alanyl-D-alanine + UDP-N-acetyl-alpha-D-glucosamine = di-trans,octa-cis-undecaprenyl diphospho-[N-acetyl-alpha-D-glucosaminyl-(1-&gt;4)]-N-acetyl-alpha-D-muramoyl-L-alanyl-D-glutamyl-meso-2,6-diaminopimeloyl-D-alanyl-D-alanine + UDP + H(+). It participates in cell wall biogenesis; peptidoglycan biosynthesis. Functionally, cell wall formation. Catalyzes the transfer of a GlcNAc subunit on undecaprenyl-pyrophosphoryl-MurNAc-pentapeptide (lipid intermediate I) to form undecaprenyl-pyrophosphoryl-MurNAc-(pentapeptide)GlcNAc (lipid intermediate II). The sequence is that of UDP-N-acetylglucosamine--N-acetylmuramyl-(pentapeptide) pyrophosphoryl-undecaprenol N-acetylglucosamine transferase from Chlorobium limicola (strain DSM 245 / NBRC 103803 / 6330).